The chain runs to 581 residues: MWGRTARRRCPRELRRGREALLVLLALLALAGLGSVLRAQRGAGAGAAEPGPPRTPRPGRREPVMPRPPVPANALGARGEAVRLQLQGEELRLQEESVRLHQINIYLSDRISLHRRLPERWNPLCKEKKYDYDNLPRTSVIIAFYNEAWSTLLRTVYSVLETSPDILLEEVILVDDYSDREHLKERLANELSGLPKVRLIRANKREGLVRARLLGASAARGDVLTFLDCHCECHEGWLEPLLQRIHEEESAVVCPVIDVIDWNTFEYLGNSGEPQIGGFDWRLVFTWHTVPERERIRMQSPVDVIRSPTMAGGLFAVSKKYFEYLGSYDTGMEVWGGENLEFSFRIWQCGGVLETHPCSHVGHVFPKQAPYSRNKALANSVRAAEVWMDEFKELYYHRNPRARLEPFGDVTERKQLRDKLQCKDFKWFLETVYPELHVPEDRPGFFGMLQNKGLTDYCFDYNPPDENQIVGHQVILYLCHGMGQNQFFEYTSQKEIRYNTHQPEGCIAVEAGMDTLIMHLCEETAPENQKFILQEDGSLFHEQSKKCVQAARKESSDSFVPLLRDCTNSDHQKWFFKERML.

Over 1 to 19 (MWGRTARRRCPRELRRGRE) the chain is Cytoplasmic. A helical; Signal-anchor for type II membrane protein membrane pass occupies residues 20 to 37 (ALLVLLALLALAGLGSVL). Residues 38–581 (RAQRGAGAGA…QKWFFKERML (544 aa)) lie on the Lumenal side of the membrane. Residues 43-67 (AGAGAAEPGPPRTPRPGRREPVMPR) are disordered. 5 cysteine pairs are disulfide-bonded: Cys125–Cys358, Cys349–Cys422, Cys458–Cys479, Cys506–Cys521, and Cys547–Cys566. Positions 135–244 (LPRTSVIIAF…EGWLEPLLQR (110 aa)) are catalytic subdomain A. 2 residues coordinate substrate: Asp176 and Arg205. Positions 228 and 230 each coordinate Mn(2+). Residues 304 to 366 (VIRSPTMAGG…PCSHVGHVFP (63 aa)) form a catalytic subdomain B region. Substrate is bound at residue Trp335. His363 serves as a coordination point for Mn(2+). Position 371 (Tyr371) interacts with substrate. Positions 445 to 577 (FFGMLQNKGL…NSDHQKWFFK (133 aa)) constitute a Ricin B-type lectin domain.

It belongs to the glycosyltransferase 2 family. GalNAc-T subfamily. Mn(2+) serves as cofactor. Widely expressed at different levels of expression. Highly expressed in digestive organs such as small intestine, stomach, pancreas and colon. Expressed at intermediate level in testis, thyroid gland and spleen. Weakly expressed in whole brain, cerebral cortex, cerebellum, fetal brain, bone marrow, thymus, leukocytes, heart, skeletal muscle, liver, lung, esophagus, kidney, adrenal gland, mammary gland, uterus, placenta, ovary and prostate.

It is found in the golgi apparatus membrane. The enzyme catalyses L-seryl-[protein] + UDP-N-acetyl-alpha-D-galactosamine = a 3-O-[N-acetyl-alpha-D-galactosaminyl]-L-seryl-[protein] + UDP + H(+). It catalyses the reaction L-threonyl-[protein] + UDP-N-acetyl-alpha-D-galactosamine = a 3-O-[N-acetyl-alpha-D-galactosaminyl]-L-threonyl-[protein] + UDP + H(+). The protein operates within protein modification; protein glycosylation. Its function is as follows. Catalyzes the initial reaction in O-linked oligosaccharide biosynthesis, the transfer of an N-acetyl-D-galactosamine residue to a serine or threonine residue on the protein receptor. Has activity toward non-glycosylated peptides such as Muc5AC, Muc1a and EA2, and no detectable activity with Muc2 and Muc7. Displays enzymatic activity toward the Gal-NAc-Muc5AC glycopeptide, but no detectable activity to mono-GalNAc-glycosylated Muc1a, Muc2, Muc7 and EA2. May play an important role in the initial step of mucin-type oligosaccharide biosynthesis in digestive organs. This Homo sapiens (Human) protein is Polypeptide N-acetylgalactosaminyltransferase 12 (GALNT12).